The following is a 394-amino-acid chain: MSQLETRTEPMVVNFGPHHPSMHGVLRLVVTLDGEDVVDCEPVIGYLHRGMEKIAENRTSVMFVPYVSRMDYAAGMFYEAIVVNAPERLANISVPKRASYIRVVMLELNRIANHLLWLGPFLADVGAQTPFFYIFREREMIYDLWEAATGQRLINNNYFRIGGVACDLPWGWLEKCQDFCDWFGPKIDEYEKLITNNPIFRRRIEGLGAIGRDEAINWSLSGPMLRASGVPWDLRKVDHYECYDDFDWDVAWEKEGDCYARYRVRIEEMRQSLKILRQACEMIPGGPTENLEAQRMAEGKKSPFTGFDYQYVSKKVAPTFKIPNGELYTRLESGKGEIGVFLQGNNDVTPWRFKIRAADLNNLQILPHILKGAKVADIMAILGSIDVIMGSVDR.

Belongs to the complex I 49 kDa subunit family. NDH-1 can be composed of about 15 different subunits; different subcomplexes with different compositions have been identified which probably have different functions.

It localises to the cellular thylakoid membrane. The catalysed reaction is a plastoquinone + NADH + (n+1) H(+)(in) = a plastoquinol + NAD(+) + n H(+)(out). It catalyses the reaction a plastoquinone + NADPH + (n+1) H(+)(in) = a plastoquinol + NADP(+) + n H(+)(out). NDH-1 shuttles electrons from an unknown electron donor, via FMN and iron-sulfur (Fe-S) centers, to quinones in the respiratory and/or the photosynthetic chain. The immediate electron acceptor for the enzyme in this species is believed to be plastoquinone. Couples the redox reaction to proton translocation, and thus conserves the redox energy in a proton gradient. Cyanobacterial NDH-1 also plays a role in inorganic carbon-concentration. This Prochlorococcus marinus (strain MIT 9303) protein is NAD(P)H-quinone oxidoreductase subunit H.